The chain runs to 279 residues: High choriolytic enzyme 2 (279 aa).

A signal peptide spans 1–20 (MNLASSACLLLLFLLGIAQA). The propeptide at 21–79 (LPVQNEEGHEEGNKEGHGEEGVEEGDEDDFVDFTTRILTSNNNTDQLLLEGDLVAPTNR) is activation peptide. Basic and acidic residues predominate over residues 26–40 (EEGHEEGNKEGHGEE). The disordered stretch occupies residues 26-46 (EEGHEEGNKEGHGEEGVEEGD). Asn-62 carries an N-linked (GlcNAc...) asparagine glycan. Positions 80–279 (NAMKCWYNSC…TRSNVLYNCR (200 aa)) constitute a Peptidase M12A domain. 3 disulfide bridges follow: Cys-84–Cys-89, Cys-129–Cys-278, and Cys-150–Cys-170. His-178 lines the Zn(2+) pocket. Glu-179 is a catalytic residue. Positions 182 and 188 each coordinate Zn(2+).

It depends on Zn(2+) as a cofactor.

The protein localises to the zymogen granule. It catalyses the reaction Hydrolysis of the inner layer of fish egg envelope. Also hydrolysis of casein and small molecule substrates such as succinyl-Leu-Leu-Val-Tyr-|-7-(4-methyl)coumarylamide.. Participates in the breakdown of the egg envelope, which is derived from the egg extracellular matrix, at the time of hatching. Thus allowing the newly hatched fish to swim free. HCE binds tightly to the egg envelope while it exerts the choriolytic swelling action. The protein is High choriolytic enzyme 2 (hceb) of Oryzias latipes (Japanese rice fish).